A 67-amino-acid polypeptide reads, in one-letter code: Histone H2A (67 aa).

Gln60 carries the N5-methylglutamine modification.

The protein belongs to the histone H2A family. As to quaternary structure, the nucleosome is a histone octamer containing two molecules each of H2A, H2B, H3 and H4 assembled in one H3-H4 heterotetramer and two H2A-H2B heterodimers. The octamer wraps approximately 147 bp of DNA.

It is found in the nucleus. Its subcellular location is the chromosome. In terms of biological role, core component of nucleosome. Nucleosomes wrap and compact DNA into chromatin, limiting DNA accessibility to the cellular machineries which require DNA as a template. Histones thereby play a central role in transcription regulation, DNA repair, DNA replication and chromosomal stability. DNA accessibility is regulated via a complex set of post-translational modifications of histones, also called histone code, and nucleosome remodeling. The chain is Histone H2A from Olisthodiscus luteus (Marine phytoflagellate).